The chain runs to 163 residues: Phosphopantetheine adenylyltransferase (163 aa).

Position 9 (serine 9) interacts with substrate. ATP-binding positions include 9–10 (SF) and histidine 17. Substrate is bound by residues lysine 41, threonine 73, and arginine 87. ATP is bound by residues 88–90 (GLR), glutamate 98, and 123–129 (YSYLSSS).

It belongs to the bacterial CoaD family. Homohexamer. Mg(2+) is required as a cofactor.

The protein resides in the cytoplasm. The enzyme catalyses (R)-4'-phosphopantetheine + ATP + H(+) = 3'-dephospho-CoA + diphosphate. It functions in the pathway cofactor biosynthesis; coenzyme A biosynthesis; CoA from (R)-pantothenate: step 4/5. Reversibly transfers an adenylyl group from ATP to 4'-phosphopantetheine, yielding dephospho-CoA (dPCoA) and pyrophosphate. This is Phosphopantetheine adenylyltransferase from Lachnoclostridium phytofermentans (strain ATCC 700394 / DSM 18823 / ISDg) (Clostridium phytofermentans).